The primary structure comprises 380 residues: Putative 8-amino-7-oxononanoate synthase (380 aa).

Arg18 lines the substrate pocket. Position 106 to 107 (106 to 107 (GY)) interacts with pyridoxal 5'-phosphate. Substrate is bound at residue His131. Pyridoxal 5'-phosphate is bound by residues Ser179, 205-208 (DEAH), and 236-239 (TFGK). Lys239 carries the post-translational modification N6-(pyridoxal phosphate)lysine. Thr352 is a binding site for substrate.

Belongs to the class-II pyridoxal-phosphate-dependent aminotransferase family. BioF subfamily. In terms of assembly, homodimer. It depends on pyridoxal 5'-phosphate as a cofactor.

It carries out the reaction 6-carboxyhexanoyl-[ACP] + L-alanine + H(+) = (8S)-8-amino-7-oxononanoate + holo-[ACP] + CO2. Its pathway is cofactor biosynthesis; biotin biosynthesis. Its function is as follows. Catalyzes the decarboxylative condensation of pimeloyl-[acyl-carrier protein] and L-alanine to produce 8-amino-7-oxononanoate (AON), [acyl-carrier protein], and carbon dioxide. The protein is Putative 8-amino-7-oxononanoate synthase (bioF) of Neisseria meningitidis serogroup B (strain ATCC BAA-335 / MC58).